The following is a 302-amino-acid chain: tRNA-cytidine(32) 2-sulfurtransferase (302 aa).

The PP-loop motif motif lies at 57–62 (SGGKDS). 3 residues coordinate [4Fe-4S] cluster: cysteine 132, cysteine 135, and cysteine 223.

This sequence belongs to the TtcA family. Homodimer. The cofactor is Mg(2+). [4Fe-4S] cluster serves as cofactor.

The protein localises to the cytoplasm. It catalyses the reaction cytidine(32) in tRNA + S-sulfanyl-L-cysteinyl-[cysteine desulfurase] + AH2 + ATP = 2-thiocytidine(32) in tRNA + L-cysteinyl-[cysteine desulfurase] + A + AMP + diphosphate + H(+). It participates in tRNA modification. Functionally, catalyzes the ATP-dependent 2-thiolation of cytidine in position 32 of tRNA, to form 2-thiocytidine (s(2)C32). The sulfur atoms are provided by the cysteine/cysteine desulfurase (IscS) system. The sequence is that of tRNA-cytidine(32) 2-sulfurtransferase from Marinobacter nauticus (strain ATCC 700491 / DSM 11845 / VT8) (Marinobacter aquaeolei).